The sequence spans 737 residues: Zinc finger protein 585A (737 aa).

A KRAB domain is found at 1–65; it reads MAAPTREEWR…QGERPRQSCP (65 aa). 6 consecutive C2H2-type zinc fingers follow at residues 126–148, 154–176, 182–204, 210–232, 238–260, and 266–288; these read YVCI…QKTH, FKCN…QRIH, YECS…EKIH, HECT…QKIH, YICI…RRIH, and YECS…QRVH. The C2H2-type 7; degenerate zinc-finger motif lies at 294-316; it reads YICTEYGKVFSNNSNLITHKKVQ. 15 C2H2-type zinc fingers span residues 322–344, 350–372, 378–400, 406–428, 434–456, 462–484, 490–512, 518–540, 546–568, 574–596, 602–624, 630–652, 658–680, 686–708, and 714–736; these read SICT…QRIH, YACS…QRIH, YICM…QIIH, YKCG…KRIH, YMCN…QKTH, YICS…QRIH, YECS…QKIH, YECH…QKIH, YVCT…QRIH, YECS…QPLH, YVCA…QKTH, YICS…HRIH, YECS…QRIH, YVCA…QTTH, and YKCG…QSNH.

This sequence belongs to the krueppel C2H2-type zinc-finger protein family.

The protein resides in the nucleus. Its function is as follows. May be involved in transcriptional regulation. This chain is Zinc finger protein 585A (ZNF585A), found in Pongo abelii (Sumatran orangutan).